We begin with the raw amino-acid sequence, 234 residues long: Leucyl/phenylalanyl-tRNA--protein transferase (234 aa).

Belongs to the L/F-transferase family.

It localises to the cytoplasm. The catalysed reaction is N-terminal L-lysyl-[protein] + L-leucyl-tRNA(Leu) = N-terminal L-leucyl-L-lysyl-[protein] + tRNA(Leu) + H(+). It carries out the reaction N-terminal L-arginyl-[protein] + L-leucyl-tRNA(Leu) = N-terminal L-leucyl-L-arginyl-[protein] + tRNA(Leu) + H(+). It catalyses the reaction L-phenylalanyl-tRNA(Phe) + an N-terminal L-alpha-aminoacyl-[protein] = an N-terminal L-phenylalanyl-L-alpha-aminoacyl-[protein] + tRNA(Phe). Functions in the N-end rule pathway of protein degradation where it conjugates Leu, Phe and, less efficiently, Met from aminoacyl-tRNAs to the N-termini of proteins containing an N-terminal arginine or lysine. This is Leucyl/phenylalanyl-tRNA--protein transferase from Tolumonas auensis (strain DSM 9187 / NBRC 110442 / TA 4).